A 283-amino-acid chain; its full sequence is 4-hydroxy-3-methylbut-2-enyl diphosphate reductase (283 aa).

Residue Cys12 coordinates [4Fe-4S] cluster. (2E)-4-hydroxy-3-methylbut-2-enyl diphosphate contacts are provided by His40 and His72. Dimethylallyl diphosphate contacts are provided by His40 and His72. The isopentenyl diphosphate site is built by His40 and His72. Cys94 contributes to the [4Fe-4S] cluster binding site. His122 contacts (2E)-4-hydroxy-3-methylbut-2-enyl diphosphate. Residue His122 participates in dimethylallyl diphosphate binding. His122 is a binding site for isopentenyl diphosphate. Catalysis depends on Glu124, which acts as the Proton donor. A (2E)-4-hydroxy-3-methylbut-2-enyl diphosphate-binding site is contributed by Thr160. Residue Cys188 participates in [4Fe-4S] cluster binding. The (2E)-4-hydroxy-3-methylbut-2-enyl diphosphate site is built by Ser216, Asn218, and Ser259. Residues Ser216, Asn218, and Ser259 each coordinate dimethylallyl diphosphate. Positions 216, 218, and 259 each coordinate isopentenyl diphosphate.

This sequence belongs to the IspH family. [4Fe-4S] cluster serves as cofactor.

It carries out the reaction isopentenyl diphosphate + 2 oxidized [2Fe-2S]-[ferredoxin] + H2O = (2E)-4-hydroxy-3-methylbut-2-enyl diphosphate + 2 reduced [2Fe-2S]-[ferredoxin] + 2 H(+). The enzyme catalyses dimethylallyl diphosphate + 2 oxidized [2Fe-2S]-[ferredoxin] + H2O = (2E)-4-hydroxy-3-methylbut-2-enyl diphosphate + 2 reduced [2Fe-2S]-[ferredoxin] + 2 H(+). Its pathway is isoprenoid biosynthesis; dimethylallyl diphosphate biosynthesis; dimethylallyl diphosphate from (2E)-4-hydroxy-3-methylbutenyl diphosphate: step 1/1. It functions in the pathway isoprenoid biosynthesis; isopentenyl diphosphate biosynthesis via DXP pathway; isopentenyl diphosphate from 1-deoxy-D-xylulose 5-phosphate: step 6/6. Functionally, catalyzes the conversion of 1-hydroxy-2-methyl-2-(E)-butenyl 4-diphosphate (HMBPP) into a mixture of isopentenyl diphosphate (IPP) and dimethylallyl diphosphate (DMAPP). Acts in the terminal step of the DOXP/MEP pathway for isoprenoid precursor biosynthesis. The sequence is that of 4-hydroxy-3-methylbut-2-enyl diphosphate reductase from Dictyoglomus turgidum (strain DSM 6724 / Z-1310).